The primary structure comprises 179 residues: tRNA-splicing endonuclease (179 aa).

Residues Y115, H125, and K156 contribute to the active site.

Belongs to the tRNA-intron endonuclease family. Archaeal short subfamily. As to quaternary structure, homotetramer; although the tetramer contains four active sites, only two participate in the cleavage. Therefore, it should be considered as a dimer of dimers.

The enzyme catalyses pretRNA = a 3'-half-tRNA molecule with a 5'-OH end + a 5'-half-tRNA molecule with a 2',3'-cyclic phosphate end + an intron with a 2',3'-cyclic phosphate and a 5'-hydroxyl terminus.. Functionally, endonuclease that removes tRNA introns. Cleaves pre-tRNA at the 5'- and 3'-splice sites to release the intron. The products are an intron and two tRNA half-molecules bearing 2',3' cyclic phosphate and 5'-OH termini. Recognizes a pseudosymmetric substrate in which 2 bulged loops of 3 bases are separated by a stem of 4 bp. The chain is tRNA-splicing endonuclease (endA) from Methanocaldococcus jannaschii (strain ATCC 43067 / DSM 2661 / JAL-1 / JCM 10045 / NBRC 100440) (Methanococcus jannaschii).